A 109-amino-acid polypeptide reads, in one-letter code: Protein reprimo (109 aa).

N-linked (GlcNAc...) asparagine glycosylation is found at Asn7 and Asn18. The chain crosses the membrane as a helical span at residues Val56 to Leu76. A Phosphoserine modification is found at Ser98.

Belongs to the reprimo family.

The protein resides in the cytoplasm. It localises to the membrane. Functionally, may be involved in the regulation of p53-dependent G2 arrest of the cell cycle. Seems to induce cell cycle arrest by inhibiting CDK1 activity and nuclear translocation of the CDC2 cyclin B1 complex. In Homo sapiens (Human), this protein is Protein reprimo (RPRM).